Consider the following 568-residue polypeptide: MDYRRLLMSRVVPGQFDDADSSDSENRDLKTVKEKDDILFEDLQDNVNENGEGEIEDEEEEGYDDDDDDWDWDEGVGKLAKGYVWNGGSNPQANRQTSDSSSAKMSTPADKVLRKFENKINLDKLNVTDSVINKVTEKSRQKEADMYRIKDKADRATVEQVLDPRTRMILFKMLTRGIITEINGCISTGKEANVYHASTANGESRAIKIYKTSILVFKDRDKYVSGEFRFRHGYCKGNPRKMVKTWAEKEMRNLIRLNTAEIPCPEPIMLRSHVLVMSFIGKDDMPAPLLKNVQLSESKARELYLQVIQYMRRMYQDARLVHADLSEFNMLYHGGGVYIIDVSQSVEHDHPHALEFLRKDCANVNDFFMRHSVAVMTVRELFEFVTDPSITHENMDAYLSKAMEIASQRTKEERSSQDHVDEEVFKRAYIPRTLNEVKNYERDMDIIMKLKEEDMAMNAQQDNILYQTVTGLKKDLSGVQKVPALLENQVEERTCSDSEDIGSSECSDTDSEEQGDHARPKKHTTDPDIDKKERKKMVKEAQREKRKNKIPKHVKKRKEKTAKTKKGK.

Disordered stretches follow at residues 14-70 (GQFD…DDDW) and 83-109 (YVWN…STPA). Residues serine 21 and serine 22 each carry the phosphoserine modification. Residues 24–38 (SENRDLKTVKEKDDI) show a composition bias toward basic and acidic residues. Residues 51 to 70 (GEGEIEDEEEEGYDDDDDDW) are compositionally biased toward acidic residues. Positions 87–105 (GGSNPQANRQTSDSSSAKM) are enriched in polar residues. Residues 180–479 (TEINGCISTG…TGLKKDLSGV (300 aa)) enclose the Protein kinase domain. ATP-binding residues include lysine 208, serine 278, and isoleucine 280. Catalysis depends on aspartate 324, which acts as the Proton acceptor. Residues asparagine 329 and aspartate 341 each coordinate Mg(2+). Residue aspartate 341 is the 4-aspartylphosphate intermediate of the active site. The disordered stretch occupies residues 490–568 (VEERTCSDSE…EKTAKTKKGK (79 aa)). The segment covering 497–513 (DSEDIGSSECSDTDSEE) has biased composition (acidic residues). Basic and acidic residues predominate over residues 514 to 543 (QGDHARPKKHTTDPDIDKKERKKMVKEAQR). The segment covering 544-568 (EKRKNKIPKHVKKRKEKTAKTKKGK) has biased composition (basic residues).

The protein belongs to the protein kinase superfamily. RIO-type Ser/Thr kinase family. Associates with the precursor of the 40S ribosome subunit. Interacts (via its N-terminus) with PRMT5 (via its N-terminus). Interacts with WDR77. Found in a PRMT5 complex composed of PRMT5, WDR77 and RIOK1. Interacts (via its C-terminus) with NCL; this interaction targets NCL for PRTM5 methylation. It depends on Mg(2+) as a cofactor.

It localises to the cytoplasm. The protein localises to the cytosol. It carries out the reaction L-seryl-[protein] + ATP = O-phospho-L-seryl-[protein] + ADP + H(+). It catalyses the reaction L-threonyl-[protein] + ATP = O-phospho-L-threonyl-[protein] + ADP + H(+). The enzyme catalyses ATP + H2O = ADP + phosphate + H(+). In terms of biological role, involved in the final steps of cytoplasmic maturation of the 40S ribosomal subunit. Involved in processing of 18S-E pre-rRNA to the mature 18S rRNA. Required for the recycling of NOB1 and PNO1 from the late 40S precursor. The association with the very late 40S subunit intermediate may involve a translation-like checkpoint point cycle preceeding the binding to the 60S ribosomal subunit. Despite the protein kinase domain is proposed to act predominantly as an ATPase. The catalytic activity regulates its dynamic association with the 40S subunit. In addition to its role in ribosomal biogenesis acts as an adapter protein by recruiting NCL/nucleolin the to PRMT5 complex for its symmetrical methylation. This Homo sapiens (Human) protein is Serine/threonine-protein kinase RIO1.